A 440-amino-acid polypeptide reads, in one-letter code: Chromosome partition protein MukF (440 aa).

The tract at residues 208–236 is leucine-zipper; that stretch reads LSETSGTLRELQDTLDAAGDKLQANLLRI.

The protein belongs to the MukF family. Interacts, and probably forms a ternary complex, with MukE and MukB via its C-terminal region. The complex formation is stimulated by calcium or magnesium. It is required for an interaction between MukE and MukB.

It is found in the cytoplasm. It localises to the nucleoid. Its function is as follows. Involved in chromosome condensation, segregation and cell cycle progression. May participate in facilitating chromosome segregation by condensation DNA from both sides of a centrally located replisome during cell division. Not required for mini-F plasmid partitioning. Probably acts via its interaction with MukB and MukE. Overexpression results in anucleate cells. It has a calcium binding activity. The polypeptide is Chromosome partition protein MukF (Klebsiella pneumoniae (strain 342)).